Consider the following 108-residue polypeptide: Pumilarin (108 aa).

Positions 1–38 (MTETKNEIKLHVLFGALAVGFLMLALFSFSLQMLPVAD) are excised as a propeptide. The cyclopeptide (Leu-Trp) cross-link spans 39-108 (LAKEFGIPGS…KKGRKAVIAW (70 aa)).

The cross-link permits a high resistance to proteolysis. Is more resistant to specific proteases than to unspecific proteases.

The protein resides in the secreted. Cyclopeptide antibiotic that inhibits both Gram-positive and Gram-negative bacteria. Shows potent to weak activities against M.flavus (MIC=3 ug/ml), B.cereus (MIC=12 ug/ml), B.pumilus (MIC=12 ug/ml), E.coli (MIC=12 ug/ml), and S.pneumoniae (MIC=47 ug/ml). May act by forming pores. The sequence is that of Pumilarin from Bacillus safensis.